Here is a 433-residue protein sequence, read N- to C-terminus: 3-phosphoshikimate 1-carboxyvinyltransferase (433 aa).

Residues K22, S23, and R27 each coordinate 3-phosphoshikimate. Position 22 (K22) interacts with phosphoenolpyruvate. 2 residues coordinate phosphoenolpyruvate: G96 and R129. Residues S175, S176, Q177, S203, D318, N341, and K345 each contribute to the 3-phosphoshikimate site. Q177 contacts phosphoenolpyruvate. D318 (proton acceptor) is an active-site residue. Phosphoenolpyruvate is bound by residues R349, R393, and K418.

Belongs to the EPSP synthase family. As to quaternary structure, monomer.

Its subcellular location is the cytoplasm. The enzyme catalyses 3-phosphoshikimate + phosphoenolpyruvate = 5-O-(1-carboxyvinyl)-3-phosphoshikimate + phosphate. Its pathway is metabolic intermediate biosynthesis; chorismate biosynthesis; chorismate from D-erythrose 4-phosphate and phosphoenolpyruvate: step 6/7. Its function is as follows. Catalyzes the transfer of the enolpyruvyl moiety of phosphoenolpyruvate (PEP) to the 5-hydroxyl of shikimate-3-phosphate (S3P) to produce enolpyruvyl shikimate-3-phosphate and inorganic phosphate. This chain is 3-phosphoshikimate 1-carboxyvinyltransferase, found in Mannheimia succiniciproducens (strain KCTC 0769BP / MBEL55E).